A 458-amino-acid polypeptide reads, in one-letter code: Phosphoglucosamine mutase (458 aa).

The active-site Phosphoserine intermediate is the Ser106. The Mg(2+) site is built by Ser106, Asp247, Asp249, and Asp251. The residue at position 106 (Ser106) is a Phosphoserine.

This sequence belongs to the phosphohexose mutase family. Mg(2+) is required as a cofactor. In terms of processing, activated by phosphorylation.

It carries out the reaction alpha-D-glucosamine 1-phosphate = D-glucosamine 6-phosphate. In terms of biological role, catalyzes the conversion of glucosamine-6-phosphate to glucosamine-1-phosphate. The protein is Phosphoglucosamine mutase of Chlamydia abortus (strain DSM 27085 / S26/3) (Chlamydophila abortus).